Here is a 500-residue protein sequence, read N- to C-terminus: Putative (R)-citramalate synthase CimA (500 aa).

Positions 9–258 constitute a Pyruvate carboxyltransferase domain; the sequence is LRFFDTTLRD…DTRIRTERLY (250 aa).

It belongs to the alpha-IPM synthase/homocitrate synthase family. Homodimer.

It catalyses the reaction pyruvate + acetyl-CoA + H2O = (3R)-citramalate + CoA + H(+). It participates in amino-acid biosynthesis; L-isoleucine biosynthesis; 2-oxobutanoate from pyruvate: step 1/3. Its function is as follows. Catalyzes the condensation of pyruvate and acetyl-coenzyme A to form (R)-citramalate. This chain is Putative (R)-citramalate synthase CimA, found in Methanosphaerula palustris (strain ATCC BAA-1556 / DSM 19958 / E1-9c).